We begin with the raw amino-acid sequence, 431 residues long: Isochorismate synthase MenF (431 aa).

Catalysis depends on Lys-183, which acts as the Proton acceptor. The active-site Proton donor is the Glu-233. Mg(2+)-binding residues include Glu-277 and Glu-414.

This sequence belongs to the isochorismate synthase family. The cofactor is Mg(2+).

The catalysed reaction is chorismate = isochorismate. It participates in quinol/quinone metabolism; 1,4-dihydroxy-2-naphthoate biosynthesis; 1,4-dihydroxy-2-naphthoate from chorismate: step 1/7. Its pathway is quinol/quinone metabolism; menaquinone biosynthesis. Catalyzes the conversion of chorismate to isochorismate. In Pasteurella multocida (strain Pm70), this protein is Isochorismate synthase MenF.